The sequence spans 327 residues: RING-H2 finger protein ATL34 (327 aa).

An N-terminal signal peptide occupies residues 1–26 (MTIGKSPILLHHHVIFLLLLVLQVSG). The helical transmembrane segment at 47 to 67 (AVIIAMLMFTLLFSMLACCVC) threads the bilayer. An RING-type; atypical zinc finger spans residues 128 to 170 (CAICLNEFEDEETLRLMPPCSHAFHASCIDVWLSSRSTCPVCR). Residues 280-327 (LSHMKTLPQARSSREGYRSGSVGSERRGKGKEKEFGEGSFDRLKAEMV) form a disordered region. The span at 303–327 (SERRGKGKEKEFGEGSFDRLKAEMV) shows a compositional bias: basic and acidic residues.

This sequence belongs to the RING-type zinc finger family. ATL subfamily.

It is found in the membrane. It carries out the reaction S-ubiquitinyl-[E2 ubiquitin-conjugating enzyme]-L-cysteine + [acceptor protein]-L-lysine = [E2 ubiquitin-conjugating enzyme]-L-cysteine + N(6)-ubiquitinyl-[acceptor protein]-L-lysine.. Its pathway is protein modification; protein ubiquitination. The chain is RING-H2 finger protein ATL34 (ATL34) from Arabidopsis thaliana (Mouse-ear cress).